A 668-amino-acid chain; its full sequence is UvrABC system protein B (668 aa).

Residues 31 to 416 (QGITDGVPAQ…RGHIIEQIIR (386 aa)) enclose the Helicase ATP-binding domain. Position 44–51 (44–51 (GTTGSGKT)) interacts with ATP. The short motif at 97–120 (YYDYYQPEAYIARSDTYIEKSLLI) is the Beta-hairpin element. The Helicase C-terminal domain maps to 433-596 (QIDDLLEEIR…ITPQPIIKPI (164 aa)). In terms of domain architecture, UVR spans 621–656 (EASIKTYEEAMYQAAQEFQFDEAVKYRDLMNAAKKQ).

Belongs to the UvrB family. As to quaternary structure, forms a heterotetramer with UvrA during the search for lesions. Interacts with UvrC in an incision complex.

It localises to the cytoplasm. The UvrABC repair system catalyzes the recognition and processing of DNA lesions. A damage recognition complex composed of 2 UvrA and 2 UvrB subunits scans DNA for abnormalities. Upon binding of the UvrA(2)B(2) complex to a putative damaged site, the DNA wraps around one UvrB monomer. DNA wrap is dependent on ATP binding by UvrB and probably causes local melting of the DNA helix, facilitating insertion of UvrB beta-hairpin between the DNA strands. Then UvrB probes one DNA strand for the presence of a lesion. If a lesion is found the UvrA subunits dissociate and the UvrB-DNA preincision complex is formed. This complex is subsequently bound by UvrC and the second UvrB is released. If no lesion is found, the DNA wraps around the other UvrB subunit that will check the other stand for damage. The protein is UvrABC system protein B of Chlamydia trachomatis serovar A (strain ATCC VR-571B / DSM 19440 / HAR-13).